Reading from the N-terminus, the 596-residue chain is Selenocysteine-specific elongation factor (596 aa).

The 213-residue stretch at 5 to 217 (RVNVNVGVLG…LLTSQISIPT (213 aa)) folds into the tr-type G domain. Positions 14–21 (GHIDSGKT) are G1. Glycine 19, threonine 21, and alanine 22 together coordinate GDP. 3 residues coordinate GTP: glycine 19, threonine 21, and alanine 22. Threonine 21 provides a ligand contact to Mg(2+). A G2 region spans residues 46–50 (GITLD). Residues threonine 48 and aspartate 92 each coordinate Mg(2+). Positions 92-95 (DCPG) are G3. The segment at 146 to 149 (NKID) is G4. GDP is bound by residues aspartate 149 and lysine 187. Residues aspartate 149 and lysine 187 each contribute to the GTP site. The segment at 185–187 (AAK) is G5. Serine 537 carries the post-translational modification Phosphoserine. A Phosphothreonine modification is found at threonine 545. A Nuclear localization signal motif is present at residues 547–553 (ALKKRAR). The tract at residues 548–573 (LKKRARAGRGEATRQEESAERSEPSQ) is disordered. Basic and acidic residues predominate over residues 555-571 (GRGEATRQEESAERSEP). Residue arginine 556 is modified to Omega-N-methylarginine.

The protein belongs to the TRAFAC class translation factor GTPase superfamily. Classic translation factor GTPase family. SelB subfamily. It depends on Mg(2+) as a cofactor. Mn(2+) serves as cofactor.

Its subcellular location is the cytoplasm. It localises to the nucleus. The enzyme catalyses GTP + H2O = GDP + phosphate + H(+). Translation factor required for the incorporation of the rare amino acid selenocysteine encoded by UGA codons. Replaces the eRF1-eRF3-GTP ternary complex for the insertion of selenocysteine directed by the UGA codon. Insertion of selenocysteine at UGA codons is mediated by SECISBP2 and EEFSEC: SECISBP2 (1) specifically binds the SECIS sequence once the 80S ribosome encounters an in-frame UGA codon and (2) contacts the RPS27A/eS31 of the 40S ribosome before ribosome stalling. (3) GTP-bound EEFSEC then delivers selenocysteinyl-tRNA(Sec) to the 80S ribosome and adopts a preaccommodated state conformation. (4) After GTP hydrolysis, EEFSEC dissociates from the assembly, selenocysteinyl-tRNA(Sec) accommodates, and peptide bond synthesis and selenoprotein elongation occur. This Homo sapiens (Human) protein is Selenocysteine-specific elongation factor.